We begin with the raw amino-acid sequence, 244 residues long: Lymphotoxin-beta (244 aa).

The Cytoplasmic segment spans residues 1-18 (MGALGLEGRGGRLQGRGS). A helical; Signal-anchor for type II membrane protein transmembrane segment spans residues 19-48 (LLLAVAGATSLVTLLLAVPITVLAVLALVP). Topologically, residues 49–244 (QDQGGLVTET…KTFFGAVMVG (196 aa)) are extracellular. The region spanning 88 to 243 (PAAHLIGAPL…GKTFFGAVMV (156 aa)) is the THD domain. Asn222 is a glycosylation site (N-linked (GlcNAc...) asparagine).

This sequence belongs to the tumor necrosis factor family. In terms of assembly, heterotrimer of either two LTB and one LTA subunits or (less prevalent) two LTA and one LTB subunits.

The protein localises to the membrane. Functionally, cytokine that binds to LTBR/TNFRSF3. May play a specific role in immune response regulation. Provides the membrane anchor for the attachment of the heterotrimeric complex to the cell surface. The protein is Lymphotoxin-beta (LTB) of Pan troglodytes (Chimpanzee).